The sequence spans 343 residues: Pseudaminic acid synthase (343 aa).

The AFP-like domain maps to 287–343 (SLYASKDIKKGEMFSEENVKSVRPSFGLHPKFYQELLGKKASKDIKFGDALKQGDFQ).

The protein belongs to the pseudaminic acid synthase family. A divalent metal cation serves as cofactor.

The catalysed reaction is 2,4-diacetamido-2,4,6-trideoxy-beta-L-altrose + phosphoenolpyruvate + H2O = pseudaminate + phosphate. In terms of biological role, catalyzes the fifth step in the biosynthesis of pseudaminic acid, a sialic-acid-like sugar that is used to modify flagellin. Catalyzes the condensation of phosphoenolpyruvate with 2,4-diacetamido-2,4,6-trideoxy-beta-l-altropyranose, forming pseudaminic acid. The chain is Pseudaminic acid synthase (pseI) from Campylobacter jejuni subsp. jejuni serotype O:2 (strain ATCC 700819 / NCTC 11168).